A 134-amino-acid polypeptide reads, in one-letter code: Retinol-binding protein 2 (134 aa).

All-trans-retinol is bound by residues Lys-41 and Gln-109.

It belongs to the calycin superfamily. Fatty-acid binding protein (FABP) family.

The protein localises to the cytoplasm. In terms of biological role, intracellular transport of retinol. The polypeptide is Retinol-binding protein 2 (Rbp2) (Rattus norvegicus (Rat)).